The sequence spans 196 residues: MAGSKKTNRREEILQALAQMLESTEGASRITTAKLAKQVGVSEAALYRHFPSKARMFEGLIEFIEEALMTRINRILDDEKDTLERIRMVMHLILAFSERNPGLTRILSGHALMFENERLRDRINQLFERIETQLRQILRERKIREGKSFPVEERILAAQILGQVEGSLNRFVRSDFKYQPTANFDEYWALLSAQIK.

Positions 7–68 (TNRREEILQA…GLIEFIEEAL (62 aa)) constitute an HTH tetR-type domain. The H-T-H motif DNA-binding region spans 31–50 (TTAKLAKQVGVSEAALYRHF). A coiled-coil region spans residues 110-142 (HALMFENERLRDRINQLFERIETQLRQILRERK).

Belongs to the nucleoid occlusion factor SlmA family. As to quaternary structure, homodimer. Interacts with FtsZ.

The protein resides in the cytoplasm. It localises to the nucleoid. In terms of biological role, required for nucleoid occlusion (NO) phenomenon, which prevents Z-ring formation and cell division over the nucleoid. Acts as a DNA-associated cell division inhibitor that binds simultaneously chromosomal DNA and FtsZ, and disrupts the assembly of FtsZ polymers. SlmA-DNA-binding sequences (SBS) are dispersed on non-Ter regions of the chromosome, preventing FtsZ polymerization at these regions. The chain is Nucleoid occlusion factor SlmA from Vibrio campbellii (strain ATCC BAA-1116).